Here is a 128-residue protein sequence, read N- to C-terminus: Holin-like protein CidA (128 aa).

Helical transmembrane passes span 4–24 (LLLT…INWV), 26–46 (ALLH…FTLL), 59–79 (GAAW…VGVI), and 88–108 (FGVS…VSTG).

The protein belongs to the CidA/LrgA family. CidA subfamily.

The protein resides in the cell membrane. Increases the activity of extracellular murein hydrolases possibly by mediating their export via hole formation. Inhibited by the antiholin-like proteins LrgAB. In an unstressed cell, the LrgAB products probably inhibit the function of the CidA protein. When a cell is stressed by the addition of antibiotics or by other factors in the environment, CidA possibly oligomerizes within the bacterial cell membrane, creating lesions that disrupt the proton motive force, which in turn results in loss of cell viability. These lesions are also hypothesized to regulate the subsequent cell lysis by either allowing the murein hydrolases access to the cell wall substrate and/or regulating their activity by a possible change in the cell wall pH that results from loss of membrane potential. The sequence is that of Holin-like protein CidA from Bacillus subtilis (strain 168).